The following is a 416-amino-acid chain: Glutamyl-tRNA reductase (416 aa).

Residues 49–52 (TCNR), S105, 110–112 (EPQ), and Q116 each bind substrate. C50 serves as the catalytic Nucleophile. An NADP(+)-binding site is contributed by 185–190 (GAGETI).

The protein belongs to the glutamyl-tRNA reductase family. In terms of assembly, homodimer.

The catalysed reaction is (S)-4-amino-5-oxopentanoate + tRNA(Glu) + NADP(+) = L-glutamyl-tRNA(Glu) + NADPH + H(+). The protein operates within porphyrin-containing compound metabolism; protoporphyrin-IX biosynthesis; 5-aminolevulinate from L-glutamyl-tRNA(Glu): step 1/2. Catalyzes the NADPH-dependent reduction of glutamyl-tRNA(Glu) to glutamate 1-semialdehyde (GSA). The polypeptide is Glutamyl-tRNA reductase (Shewanella sediminis (strain HAW-EB3)).